A 563-amino-acid chain; its full sequence is MAKLLSFSDESRGALEKGVNNLANALKVTIGPKGRNVVIEKKFGAPDIVNDGVTIAKEIDLEDPFENIGAKLIEQVASKTKEKAGDGTTTATVLAQFMVQEGLRNTAAGASPIELRRGMEKAVAQIVDDLKKKSKSVSGDAIKQVATVSAGGDEEIGSMIADAIDKVSFDGVITVEESKSLATELDITEGMAFDRGYSSPYFVTDEDRLICEFENPSILITDKKISSIADLIPVLETVQKNGTPLIILAEEVEGEALATLVVNKNRGVLQVAAVRAPSFGERRKAALGDIAVLTGGTLISEDKAMSLEKVQISDLGQARRVTITKDSTTIVANDNQNTELSNRIASIKRELDETDSEYDQEKLNERIAKLAGGVAVIKVGAPTETELKNRKLRIEDALNATRAAIEEGIVAGGGTTLLELSEGLGDLAKKLEGDQKTGVEIIKRALTAPTKQIAINAGFNGDVVVSDIKRLGKGFNAQTGEYVDLLEAGILDASKVIRLALQDAVSIASLLITTEVVIADKPEPPSAPGAEGGDPMGGMGGMGGMGGMGGMGGMGGMGMPGMM.

ATP-binding positions include 29 to 32 (TIGP), 86 to 90 (DGTTT), G413, and D492. A disordered region spans residues 520 to 541 (DKPEPPSAPGAEGGDPMGGMGG). The segment covering 530–541 (AEGGDPMGGMGG) has biased composition (gly residues).

The protein belongs to the chaperonin (HSP60) family. As to quaternary structure, forms a cylinder of 14 subunits composed of two heptameric rings stacked back-to-back. Interacts with the co-chaperonin GroES.

It is found in the cytoplasm. It catalyses the reaction ATP + H2O + a folded polypeptide = ADP + phosphate + an unfolded polypeptide.. Its function is as follows. Together with its co-chaperonin GroES, plays an essential role in assisting protein folding. The GroEL-GroES system forms a nano-cage that allows encapsulation of the non-native substrate proteins and provides a physical environment optimized to promote and accelerate protein folding. This Prochlorococcus marinus (strain NATL1A) protein is Chaperonin GroEL 1.